Reading from the N-terminus, the 135-residue chain is Small ribosomal subunit protein uS11 (135 aa).

It belongs to the universal ribosomal protein uS11 family. In terms of assembly, part of the 30S ribosomal subunit. Interacts with proteins S7 and S18. Binds to IF-3.

Its function is as follows. Located on the platform of the 30S subunit, it bridges several disparate RNA helices of the 16S rRNA. Forms part of the Shine-Dalgarno cleft in the 70S ribosome. This chain is Small ribosomal subunit protein uS11, found in Cutibacterium acnes (strain DSM 16379 / KPA171202) (Propionibacterium acnes).